A 398-amino-acid chain; its full sequence is CCA-adding enzyme (398 aa).

2 residues coordinate ATP: glycine 32 and arginine 35. CTP-binding residues include glycine 32 and arginine 35. The Mg(2+) site is built by aspartate 45 and aspartate 47. ATP is bound by residues arginine 116, aspartate 159, arginine 162, arginine 165, and arginine 168. CTP-binding residues include arginine 116, aspartate 159, arginine 162, arginine 165, and arginine 168.

This sequence belongs to the tRNA nucleotidyltransferase/poly(A) polymerase family. Bacterial CCA-adding enzyme type 3 subfamily. Homodimer. It depends on Mg(2+) as a cofactor.

It catalyses the reaction a tRNA precursor + 2 CTP + ATP = a tRNA with a 3' CCA end + 3 diphosphate. The enzyme catalyses a tRNA with a 3' CCA end + 2 CTP + ATP = a tRNA with a 3' CCACCA end + 3 diphosphate. Catalyzes the addition and repair of the essential 3'-terminal CCA sequence in tRNAs without using a nucleic acid template. Adds these three nucleotides in the order of C, C, and A to the tRNA nucleotide-73, using CTP and ATP as substrates and producing inorganic pyrophosphate. tRNA 3'-terminal CCA addition is required both for tRNA processing and repair. Also involved in tRNA surveillance by mediating tandem CCA addition to generate a CCACCA at the 3' terminus of unstable tRNAs. While stable tRNAs receive only 3'-terminal CCA, unstable tRNAs are marked with CCACCA and rapidly degraded. The protein is CCA-adding enzyme of Lactobacillus gasseri (strain ATCC 33323 / DSM 20243 / BCRC 14619 / CIP 102991 / JCM 1131 / KCTC 3163 / NCIMB 11718 / NCTC 13722 / AM63).